The primary structure comprises 362 residues: Dihydroorotate dehydrogenase (quinone) (362 aa).

FMN-binding positions include Ala-62 to Lys-66 and Thr-86. Residue Lys-66 coordinates substrate. Asn-111–Phe-115 serves as a coordination point for substrate. FMN-binding residues include Asn-139 and Asn-170. Asn-170 is a substrate binding site. Catalysis depends on Ser-173, which acts as the Nucleophile. Asn-175 is a binding site for substrate. FMN is bound by residues Lys-215 and Ser-243. Asn-244–Thr-245 serves as a coordination point for substrate. Residues Gly-266, Gly-295, and Tyr-316 to Ser-317 each bind FMN.

It belongs to the dihydroorotate dehydrogenase family. Type 2 subfamily. Monomer. FMN is required as a cofactor.

The protein resides in the cell membrane. The catalysed reaction is (S)-dihydroorotate + a quinone = orotate + a quinol. The protein operates within pyrimidine metabolism; UMP biosynthesis via de novo pathway; orotate from (S)-dihydroorotate (quinone route): step 1/1. Its function is as follows. Catalyzes the conversion of dihydroorotate to orotate with quinone as electron acceptor. The chain is Dihydroorotate dehydrogenase (quinone) from Rhizobium etli (strain ATCC 51251 / DSM 11541 / JCM 21823 / NBRC 15573 / CFN 42).